The sequence spans 174 residues: MTGLNTAGSDRDYDTQSLNRELQDKGFLLTTTEDLINWARTGSLHWMTFGLACCAVEMMHTSMPRYDVERFGVAPRASPRQSDVMIVAGTLTNKMAPALRKVYDQMPEPRYVISMGSCANGGGYYHYSYSVVRGCDRIVPVDIYVPGCPPTAEALLYGILQLQRKIRRTGTITR.

Positions 53, 54, 118, and 148 each coordinate [4Fe-4S] cluster.

Belongs to the complex I 20 kDa subunit family. NDH-1 is composed of 14 different subunits. Subunits NuoB, C, D, E, F, and G constitute the peripheral sector of the complex. The cofactor is [4Fe-4S] cluster.

Its subcellular location is the cell inner membrane. The enzyme catalyses a quinone + NADH + 5 H(+)(in) = a quinol + NAD(+) + 4 H(+)(out). NDH-1 shuttles electrons from NADH, via FMN and iron-sulfur (Fe-S) centers, to quinones in the respiratory chain. The immediate electron acceptor for the enzyme in this species is believed to be ubiquinone. Couples the redox reaction to proton translocation (for every two electrons transferred, four hydrogen ions are translocated across the cytoplasmic membrane), and thus conserves the redox energy in a proton gradient. The chain is NADH-quinone oxidoreductase subunit B 1 from Cereibacter sphaeroides (strain KD131 / KCTC 12085) (Rhodobacter sphaeroides).